Consider the following 204-residue polypeptide: Pantothenate transporter PanT (204 aa).

6 consecutive transmembrane segments (helical) span residues 18-38 (IILLQVLIPWLGYIPLGAVIV), 39-59 (GAQPTIIQFTVAIAAILLGAR), 63-83 (FIGGFWGLLTLWQAWSTPGSI), 86-106 (LMFQNPFTAFIPRILVGLIIG), 123-143 (LGLGFLGGLAALINTVGVVLL), and 176-196 (IFEIITGIILVAAIGNVLVPI).

In terms of assembly, in E.coli forms a stable energy-coupling factor (ECF) transporter complex probably composed of a membrane-embedded substrate-binding protein (S component), two ATP-binding proteins (A components) and a transmembrane protein (T component).

The protein resides in the cell membrane. Functionally, probable pantothenate-binding protein that interacts with the energy-coupling factor (ECF) ABC-transporter complex. Unlike classic ABC transporters this ECF transporter provides the energy necessary to transport a number of different substrates. The substrates themselves are bound by transmembrane, not extracytoplasmic soluble proteins and transport it into cells. Upon coexpression with its energy-coupling factor (ECF) ABC-transporter complex EcfA1A2T in E.coli allows pantothenate uptake; uptake requires both PanT and EcfA1A2T. In Leuconostoc mesenteroides subsp. mesenteroides (strain ATCC 8293 / DSM 20343 / BCRC 11652 / CCM 1803 / JCM 6124 / NCDO 523 / NBRC 100496 / NCIMB 8023 / NCTC 12954 / NRRL B-1118 / 37Y), this protein is Pantothenate transporter PanT (panT).